The primary structure comprises 75 residues: UPF0352 protein VV1_3121 (75 aa).

This sequence belongs to the UPF0352 family.

The protein is UPF0352 protein VV1_3121 of Vibrio vulnificus (strain CMCP6).